The primary structure comprises 97 residues: Co-chaperonin GroES (97 aa).

It belongs to the GroES chaperonin family. As to quaternary structure, heptamer of 7 subunits arranged in a ring. Interacts with the chaperonin GroEL.

It is found in the cytoplasm. Together with the chaperonin GroEL, plays an essential role in assisting protein folding. The GroEL-GroES system forms a nano-cage that allows encapsulation of the non-native substrate proteins and provides a physical environment optimized to promote and accelerate protein folding. GroES binds to the apical surface of the GroEL ring, thereby capping the opening of the GroEL channel. This Edwardsiella ictaluri (strain 93-146) protein is Co-chaperonin GroES.